Here is a 437-residue protein sequence, read N- to C-terminus: Endoplasmic reticulum protein SC65 (437 aa).

The signal sequence occupies residues 1 to 18 (MARVAWGLLWLLLGSAGA). Asparagine 361 carries N-linked (GlcNAc...) asparagine glycosylation. Acidic residues-rich tracts occupy residues 381–413 (DEME…EEGM) and 428–437 (AEAEPEPELA). The tract at residues 381-437 (DEMELEETEPPLEPEDALSDAEFEGEGDYEEGMYADWWQEPDAKGDEAEAEPEPELA) is disordered.

The protein belongs to the leprecan family. Interacts with PLOD1, P3H3 and PPIB. Identified in a complex with PLOD1 and P3H3. In terms of tissue distribution, detected in fibroblasts (at protein level). Detected in spleen, prostate, testis, ovary, colon, pancreas, kidney, placenta and heart.

It localises to the endoplasmic reticulum. In terms of biological role, part of a complex composed of PLOD1, P3H3 and P3H4 that catalyzes hydroxylation of lysine residues in collagen alpha chains and is required for normal assembly and cross-linking of collagen fibrils. Required for normal bone density and normal skin stability via its role in hydroxylation of lysine residues in collagen alpha chains and in collagen fibril assembly. This Homo sapiens (Human) protein is Endoplasmic reticulum protein SC65.